A 262-amino-acid chain; its full sequence is 5'-nucleotidase SurE (262 aa).

Positions 13, 14, 44, and 97 each coordinate a divalent metal cation.

The protein belongs to the SurE nucleotidase family. A divalent metal cation is required as a cofactor.

It localises to the cytoplasm. The enzyme catalyses a ribonucleoside 5'-phosphate + H2O = a ribonucleoside + phosphate. Its function is as follows. Nucleotidase that shows phosphatase activity on nucleoside 5'-monophosphates. The polypeptide is 5'-nucleotidase SurE (Myxococcus xanthus (strain DK1622)).